The following is a 487-amino-acid chain: Beta-barrel assembly-enhancing protease (487 aa).

Residues 1 to 27 (MFRQLKKNLVATLIAAMTIGQVAPAFA) form the signal peptide. His-136 is a binding site for Zn(2+). Glu-137 is a catalytic residue. The Zn(2+) site is built by His-140 and Glu-201. Asp-205 (proton donor) is an active-site residue. 4 TPR repeats span residues 309-342 (RAAQ…EPGN), 344-376 (WYLD…RTNP), 377-409 (VLQL…NKDD), and 427-460 (DQEL…VKLG).

The protein belongs to the peptidase M48 family. BepA subfamily. It depends on Zn(2+) as a cofactor.

The protein localises to the periplasm. In terms of biological role, functions both as a chaperone and a metalloprotease. Maintains the integrity of the outer membrane by promoting either the assembly or the elimination of outer membrane proteins, depending on their folding state. In Escherichia coli O157:H7, this protein is Beta-barrel assembly-enhancing protease.